A 200-amino-acid chain; its full sequence is CASP-like protein 1U2 (200 aa).

Topologically, residues 1–33 (MAEPVIVVPRKGVYSDDSYHHHHRHHSFHSCTN) are cytoplasmic. Residues 34–54 (FLLRTLTAGATAAAVVVMLIS) form a helical membrane-spanning segment. Topologically, residues 55-77 (TQTSGTIYGYFRGRWRDYPAYKW) are extracellular. A helical membrane pass occupies residues 78-98 (LIIANAVVFVYSVMAAIVACF). Residues 99–120 (SVIARRGPLSYSPSAWLTLLVD) lie on the Cytoplasmic side of the membrane. A helical transmembrane segment spans residues 121–141 (FLAASALISAASAALAVALLA). At 142-168 (RNGQDLQGTHYWPTVCNYVSKFCDYTQ) the chain is on the extracellular side. The helical transmembrane segment at 169–189 (GAIIASFVGFGLLFLSTLLAA) threads the bilayer. Residues 190-200 (SALYHLSHRRH) lie on the Cytoplasmic side of the membrane.

The protein belongs to the Casparian strip membrane proteins (CASP) family. As to quaternary structure, homodimer and heterodimers.

The protein resides in the cell membrane. This Physcomitrium patens (Spreading-leaved earth moss) protein is CASP-like protein 1U2.